A 322-amino-acid chain; its full sequence is 3-alpha-hydroxysteroid dehydrogenase (322 aa).

Residue M1 is modified to Blocked amino end (Met). Residues G20–T24 and D50 contribute to the NADP(+) site. The active-site Proton donor is the Y55. H117 contacts substrate. NADP(+) is bound by residues S166–N167, Q190, and Y216–S221. Residue W227 coordinates substrate. Position 270–280 (R270–L280) interacts with NADP(+).

Belongs to the aldo/keto reductase family. As to quaternary structure, monomer. In terms of tissue distribution, in brain, highest levels found in olfactory bulb. Moderate levels present in cerebellum, cerebral cortex, hypothalamus and pituitary. Low levels present in amygdala, brain stem, caudate putamen, cingulate cortex, hippocampus, midbrain, and thalamus.

It localises to the cytoplasm. The enzyme catalyses a 3alpha-hydroxysteroid + NADP(+) = a 3-oxosteroid + NADPH + H(+). It catalyses the reaction a 3alpha-hydroxysteroid + NAD(+) = a 3-oxosteroid + NADH + H(+). With respect to regulation, potently inhibited by the nonsteroidal anti-inflammatory drugs (NSAID). Besides being a 3-alpha-hydroxysteroid dehydrogenase, the enzyme can accomplish diverse functions: as quinone reductase, as an aromatic alcohol dehydrogenase, as dihydrodiol dehydrogenase, and as 9-, 11-, and 15-hydroxyprostaglandin dehydrogenase. This is 3-alpha-hydroxysteroid dehydrogenase (Akr1c9) from Rattus norvegicus (Rat).